The primary structure comprises 709 residues: Pentatricopeptide repeat-containing protein At5g42310, chloroplastic (709 aa).

A chloroplast-targeting transit peptide spans 1 to 54; that stretch reads MLLLQQPPLVSTRFHSLYFLTHHHHHHHRFFQPPISAFSATTSASLPSPSPSSS. PPR repeat units lie at residues 196–230, 231–267, 268–302, 303–337, 338–372, 373–407, 408–442, 443–477, 478–512, 513–547, 548–582, 583–617, 618–652, and 653–687; these read TPLTYNALIGACARNNDIEKALNLIAKMRQDGYQS, DFVNYSLVIQSLTRSNKIDSVMLLRLYKEIERDKLEL, DVQLVNDIIMGFAKSGDPSKALQLLGMAQATGLSA, KTATLVSIISALADSGRTLEAEALFEELRQSGIKP, RTRAYNALLKGYVKTGPLKDAESMVSEMEKRGVSP, DEHTYSLLIDAYVNAGRWESARIVLKEMEAGDVQP, NSFVFSRLLAGFRDRGEWQKTFQVLKEMKSIGVKP, DRQFYNVVIDTFGKFNCLDHAMTTFDRMLSEGIEP, DRVTWNTLIDCHCKHGRHIVAEEMFEAMERRGCLP, CATTYNIMINSYGDQERWDDMKRLLGKMKSQGILP, NVVTHTTLVDVYGKSGRFNDAIECLEEMKSVGLKP, SSTMYNALINAYAQRGLSEQAVNAFRVMTSDGLKP, SLLALNSLINAFGEDRRDAEAFAVLQYMKENGVKP, and DVVTYTTLMKALIRVDKFQKVPVVYEEMIMSGCKP.

It belongs to the PPR family. P subfamily. Interacts with PDE338.

It is found in the plastid. Its subcellular location is the chloroplast stroma. The protein resides in the chloroplast thylakoid. The protein localises to the chloroplast. Functionally, required for chloroplast protein synthesis and accumulation of subunits of the thylakoid protein complexes. Activates psaC and petA translation by binding their 5'-UTRs. Required for the correct processing of petB and petD mRNAs. Interacts with the petB and petD intergenic region and is required for the generation of petB and petD monocistronic RNAs. This Arabidopsis thaliana (Mouse-ear cress) protein is Pentatricopeptide repeat-containing protein At5g42310, chloroplastic.